Consider the following 206-residue polypeptide: Large ribosomal subunit protein uL4 (206 aa).

This sequence belongs to the universal ribosomal protein uL4 family. In terms of assembly, part of the 50S ribosomal subunit.

Functionally, one of the primary rRNA binding proteins, this protein initially binds near the 5'-end of the 23S rRNA. It is important during the early stages of 50S assembly. It makes multiple contacts with different domains of the 23S rRNA in the assembled 50S subunit and ribosome. Its function is as follows. Forms part of the polypeptide exit tunnel. This is Large ribosomal subunit protein uL4 from Rhodopseudomonas palustris (strain BisB5).